A 77-amino-acid chain; its full sequence is Putative defensin-like protein 120 (77 aa).

An N-terminal signal peptide occupies residues 1–26; that stretch reads MTQKATILAIFMVVLVLGLETKETQG. 4 cysteine pairs are disulfide-bonded: Cys-30–Cys-75, Cys-39–Cys-60, Cys-44–Cys-69, and Cys-48–Cys-71.

Belongs to the DEFL family.

The protein localises to the secreted. The polypeptide is Putative defensin-like protein 120 (LCR56) (Arabidopsis thaliana (Mouse-ear cress)).